The following is a 163-amino-acid chain: Large ribosomal subunit protein uL13m (163 aa).

N-acetylserine is present on Ser2. Residues 2–4 (SQK) constitute a propeptide that is removed on maturation.

It belongs to the universal ribosomal protein uL13 family. In terms of assembly, component of the mitochondrial large ribosomal subunit (mt-LSU). Mature yeast 74S mitochondrial ribosomes consist of a small (37S) and a large (54S) subunit. The 37S small subunit contains a 15S ribosomal RNA (15S mt-rRNA) and 34 different proteins. The 54S large subunit contains a 21S rRNA (21S mt-rRNA) and 46 different proteins.

The protein resides in the mitochondrion. In terms of biological role, component of the mitochondrial ribosome (mitoribosome), a dedicated translation machinery responsible for the synthesis of mitochondrial genome-encoded proteins, including at least some of the essential transmembrane subunits of the mitochondrial respiratory chain. The mitoribosomes are attached to the mitochondrial inner membrane and translation products are cotranslationally integrated into the membrane. The protein is Large ribosomal subunit protein uL13m (MRPL23) of Saccharomyces cerevisiae (strain ATCC 204508 / S288c) (Baker's yeast).